Consider the following 335-residue polypeptide: Biotin synthase (335 aa).

In terms of domain architecture, Radical SAM core spans 46–274; sequence YKVQLASLFS…KSKIRLSAGR (229 aa). The [4Fe-4S] cluster site is built by cysteine 61, cysteine 65, and cysteine 68. Cysteine 105, cysteine 137, cysteine 197, and arginine 269 together coordinate [2Fe-2S] cluster.

It belongs to the radical SAM superfamily. Biotin synthase family. As to quaternary structure, homodimer. [4Fe-4S] cluster serves as cofactor. The cofactor is [2Fe-2S] cluster.

The enzyme catalyses (4R,5S)-dethiobiotin + (sulfur carrier)-SH + 2 reduced [2Fe-2S]-[ferredoxin] + 2 S-adenosyl-L-methionine = (sulfur carrier)-H + biotin + 2 5'-deoxyadenosine + 2 L-methionine + 2 oxidized [2Fe-2S]-[ferredoxin]. It participates in cofactor biosynthesis; biotin biosynthesis; biotin from 7,8-diaminononanoate: step 2/2. Its function is as follows. Catalyzes the conversion of dethiobiotin (DTB) to biotin by the insertion of a sulfur atom into dethiobiotin via a radical-based mechanism. The chain is Biotin synthase from Prochlorococcus marinus (strain MIT 9515).